Consider the following 112-residue polypeptide: MNNYEAVFILTPVLSDEQVKETVNKFKDILIAEEAEIINEENWGLRKLSYPIQRKTTGFYFLLEFKSDSTIISKLETQFRRDEKVLRFLTFRQNKVFMEYALKRRNKLKETK.

It belongs to the bacterial ribosomal protein bS6 family.

Functionally, binds together with bS18 to 16S ribosomal RNA. This Azobacteroides pseudotrichonymphae genomovar. CFP2 protein is Small ribosomal subunit protein bS6.